Here is a 147-residue protein sequence, read N- to C-terminus: Phosphoribosyl-AMP cyclohydrolase (147 aa).

Aspartate 97 provides a ligand contact to Mg(2+). Residue cysteine 98 participates in Zn(2+) binding. Aspartate 99 and aspartate 101 together coordinate Mg(2+). Zn(2+)-binding residues include cysteine 114 and cysteine 121.

This sequence belongs to the PRA-CH family. In terms of assembly, homodimer. The cofactor is Mg(2+). Zn(2+) is required as a cofactor.

It localises to the cytoplasm. The enzyme catalyses 1-(5-phospho-beta-D-ribosyl)-5'-AMP + H2O = 1-(5-phospho-beta-D-ribosyl)-5-[(5-phospho-beta-D-ribosylamino)methylideneamino]imidazole-4-carboxamide. It participates in amino-acid biosynthesis; L-histidine biosynthesis; L-histidine from 5-phospho-alpha-D-ribose 1-diphosphate: step 3/9. Functionally, catalyzes the hydrolysis of the adenine ring of phosphoribosyl-AMP. This Hydrogenovibrio crunogenus (strain DSM 25203 / XCL-2) (Thiomicrospira crunogena) protein is Phosphoribosyl-AMP cyclohydrolase.